A 328-amino-acid chain; its full sequence is dTDP-3,4-didehydro-2,6-dideoxy-alpha-D-glucose 3-reductase (328 aa).

A substrate-binding site is contributed by R20. NADP(+) is bound by residues 38–39 (SR), L75, and H80. K98 (proton donor) is an active-site residue. Positions 166 and 178 each coordinate NADP(+). Residues Y236 and T256 each coordinate substrate.

Belongs to the Gfo/Idh/MocA family.

It catalyses the reaction dTDP-4-dehydro-2,6-dideoxy-alpha-D-glucose + NADP(+) = dTDP-3,4-didehydro-2,6-dideoxy-alpha-D-glucose + NADPH + H(+). Its pathway is antibiotic biosynthesis. Involved in the biosynthesis of one of the two 2,6-deoxysugars, dTDP-L-oleandrose, attached to the macrolactone ring oleandolide to produce the aglycone antibiotic oleandomycin. Catalyzes the reduction of the C-3 keto moiety of dTDP-3,4-diketo-2,6-dideoxy-alpha-D-glucose to yield dTDP-4-keto-2,6-dideoxy-alpha-D-glucose. NADPH is the better reductant, however NADH can also be used. The protein is dTDP-3,4-didehydro-2,6-dideoxy-alpha-D-glucose 3-reductase of Streptomyces antibioticus.